The chain runs to 365 residues: Undecaprenyl-phosphate alpha-N-acetylglucosaminyl 1-phosphate transferase (365 aa).

10 consecutive transmembrane segments (helical) span residues 3–23 (LLTM…FLFV), 45–65 (GLIP…AFLI), 99–119 (IRAF…GLYL), 132–152 (VLGP…INAF), 157–177 (GIDG…GILL), 187–207 (LWCF…LGLL), 213–233 (VFMG…ILLQ), 242–262 (INPV…IAIM), 293–313 (QAFV…VIGE), and 315–335 (LTFI…LLYG).

The protein belongs to the glycosyltransferase 4 family. WecA subfamily. Mg(2+) is required as a cofactor. It depends on Mn(2+) as a cofactor.

The protein resides in the cell inner membrane. It carries out the reaction di-trans,octa-cis-undecaprenyl phosphate + UDP-N-acetyl-alpha-D-glucosamine = N-acetyl-alpha-D-glucosaminyl-di-trans,octa-cis-undecaprenyl diphosphate + UMP. The protein operates within bacterial outer membrane biogenesis; LPS O-antigen biosynthesis. It participates in bacterial outer membrane biogenesis; enterobacterial common antigen biosynthesis. In terms of biological role, catalyzes the transfer of the GlcNAc-1-phosphate moiety from UDP-GlcNAc onto the carrier lipid undecaprenyl phosphate (C55-P), yielding GlcNAc-pyrophosphoryl-undecaprenyl (GlcNAc-PP-C55). In Yersinia pestis, this protein is Undecaprenyl-phosphate alpha-N-acetylglucosaminyl 1-phosphate transferase.